A 139-amino-acid polypeptide reads, in one-letter code: ATP synthase epsilon chain (139 aa).

This sequence belongs to the ATPase epsilon chain family. As to quaternary structure, F-type ATPases have 2 components, CF(1) - the catalytic core - and CF(0) - the membrane proton channel. CF(1) has five subunits: alpha(3), beta(3), gamma(1), delta(1), epsilon(1). CF(0) has three main subunits: a, b and c.

The protein resides in the cell inner membrane. Its function is as follows. Produces ATP from ADP in the presence of a proton gradient across the membrane. This is ATP synthase epsilon chain from Enterobacter sp. (strain 638).